The sequence spans 487 residues: Probable Xaa-Pro aminopeptidase AFUB_014460 (487 aa).

Residues aspartate 267, aspartate 278, glutamate 416, and glutamate 455 each contribute to the Mn(2+) site.

It belongs to the peptidase M24B family. The cofactor is Mn(2+).

It carries out the reaction Release of any N-terminal amino acid, including proline, that is linked to proline, even from a dipeptide or tripeptide.. Functionally, catalyzes the removal of a penultimate prolyl residue from the N-termini of peptides. The polypeptide is Probable Xaa-Pro aminopeptidase AFUB_014460 (Aspergillus fumigatus (strain CBS 144.89 / FGSC A1163 / CEA10) (Neosartorya fumigata)).